The primary structure comprises 337 residues: Glyceraldehyde-3-phosphate dehydrogenase (337 aa).

Residues 12 to 13 (RI), aspartate 34, and arginine 79 contribute to the NAD(+) site. Residues 150–152 (SCT), threonine 181, 210–211 (TG), and arginine 233 contribute to the D-glyceraldehyde 3-phosphate site. Cysteine 151 acts as the Nucleophile in catalysis. Asparagine 315 is a binding site for NAD(+).

Belongs to the glyceraldehyde-3-phosphate dehydrogenase family. As to quaternary structure, homotetramer.

It is found in the cytoplasm. The catalysed reaction is D-glyceraldehyde 3-phosphate + phosphate + NAD(+) = (2R)-3-phospho-glyceroyl phosphate + NADH + H(+). It participates in carbohydrate degradation; glycolysis; pyruvate from D-glyceraldehyde 3-phosphate: step 1/5. The sequence is that of Glyceraldehyde-3-phosphate dehydrogenase from Cryphonectria parasitica (Chestnut blight fungus).